The primary structure comprises 164 residues: Peptide deformylase (164 aa).

2 residues coordinate Fe cation: Cys-87 and His-129. Glu-130 is an active-site residue. His-133 contacts Fe cation.

This sequence belongs to the polypeptide deformylase family. Fe(2+) is required as a cofactor.

The enzyme catalyses N-terminal N-formyl-L-methionyl-[peptide] + H2O = N-terminal L-methionyl-[peptide] + formate. Its function is as follows. Removes the formyl group from the N-terminal Met of newly synthesized proteins. Requires at least a dipeptide for an efficient rate of reaction. N-terminal L-methionine is a prerequisite for activity but the enzyme has broad specificity at other positions. This is Peptide deformylase from Thermotoga sp. (strain RQ2).